A 346-amino-acid polypeptide reads, in one-letter code: Phosphate acyltransferase (346 aa).

This sequence belongs to the PlsX family. As to quaternary structure, homodimer. Probably interacts with PlsY.

The protein resides in the cytoplasm. It catalyses the reaction a fatty acyl-[ACP] + phosphate = an acyl phosphate + holo-[ACP]. The protein operates within lipid metabolism; phospholipid metabolism. Catalyzes the reversible formation of acyl-phosphate (acyl-PO(4)) from acyl-[acyl-carrier-protein] (acyl-ACP). This enzyme utilizes acyl-ACP as fatty acyl donor, but not acyl-CoA. The protein is Phosphate acyltransferase of Brucella abortus (strain S19).